Consider the following 141-residue polypeptide: Large ribosomal subunit protein uL11 (141 aa).

This sequence belongs to the universal ribosomal protein uL11 family. In terms of assembly, part of the ribosomal stalk of the 50S ribosomal subunit. Interacts with L10 and the large rRNA to form the base of the stalk. L10 forms an elongated spine to which L12 dimers bind in a sequential fashion forming a multimeric L10(L12)X complex. In terms of processing, one or more lysine residues are methylated.

In terms of biological role, forms part of the ribosomal stalk which helps the ribosome interact with GTP-bound translation factors. In Thermomicrobium roseum (strain ATCC 27502 / DSM 5159 / P-2), this protein is Large ribosomal subunit protein uL11.